The primary structure comprises 373 residues: D-amino-acid oxidase 3 (373 aa).

Residues Met1–Ala19 form the signal peptide. FAD-binding residues include Ser11, Leu14, Asp35, Ala46, Ser47, Gly51, and Asn53. Phe57 provides a ligand contact to anthranilate. Asn180 carries an N-linked (GlcNAc...) asparagine glycan. A disulfide bond links Cys214 and Cys271. The anthranilate site is built by Tyr229, Tyr246, and Arg296. (R)-lactate is bound by residues Tyr229, Tyr246, and Arg296. Residues Arg296, Gly342, Gly345, Tyr346, and Gln347 each contribute to the FAD site. The Microbody targeting signal signature appears at Ala371–Leu373.

This sequence belongs to the DAMOX/DASOX family. It depends on FAD as a cofactor.

It localises to the peroxisome matrix. The enzyme catalyses a D-alpha-amino acid + O2 + H2O = a 2-oxocarboxylate + H2O2 + NH4(+). Its function is as follows. Catalyzes the oxidative deamination of D-amino acids with broad substrate specificity. Enables the organism to utilize D-amino acids as a source of nutrients. Enables the organism to utilize D-glutamate and D-methionine as a nitrogen source. Protects the organism from the toxicity of D-amino acids, including from D-glutamate. May play a role in its interaction with the host. This is D-amino-acid oxidase 3 from Cryptococcus neoformans var. grubii serotype A (strain H99 / ATCC 208821 / CBS 10515 / FGSC 9487) (Filobasidiella neoformans var. grubii).